A 370-amino-acid polypeptide reads, in one-letter code: Anhydro-N-acetylmuramic acid kinase (370 aa).

12 to 19 (GTSLDGVD) contacts ATP.

The protein belongs to the anhydro-N-acetylmuramic acid kinase family.

The enzyme catalyses 1,6-anhydro-N-acetyl-beta-muramate + ATP + H2O = N-acetyl-D-muramate 6-phosphate + ADP + H(+). The protein operates within amino-sugar metabolism; 1,6-anhydro-N-acetylmuramate degradation. Its pathway is cell wall biogenesis; peptidoglycan recycling. Catalyzes the specific phosphorylation of 1,6-anhydro-N-acetylmuramic acid (anhMurNAc) with the simultaneous cleavage of the 1,6-anhydro ring, generating MurNAc-6-P. Is required for the utilization of anhMurNAc either imported from the medium or derived from its own cell wall murein, and thus plays a role in cell wall recycling. The polypeptide is Anhydro-N-acetylmuramic acid kinase (Pectobacterium atrosepticum (strain SCRI 1043 / ATCC BAA-672) (Erwinia carotovora subsp. atroseptica)).